The following is a 485-amino-acid chain: MEREVQRVRQAFLSGRSRPLRFRLQQLEALRRMVQEREKDILAAIAADLCKSELNAYSQEVITVLGEIDFMLENLPEWVTAKPVKKNLLTMMDEAYIQPQPLGVVLIIGAWNYPFVLIIQPLIGAIAAGNAVIIKPSELSENTAKIVAKLLPQYLDQDLYVVINGGVEETTELLKQRFDHIFYTGNTAVGKIVMEAAAKHLTPVTLELGGKSPCYIDKDCDLDIVCRRITWGKYMNCGQTCIAPDYILCEASLQSQIVWKIKETVKEFYGENIKESPDYERIINLRHFKRILSLLEGQKIALGGETDEATRYIAPTVLTDVDPKTKVMQEEIFGPVLPIVPVKNVDEATDFINEREKPLALYVFSHNHKLIKRMIDETSSGGVTGNDVIMHFTLNSFPFGGVGSSGMGAYHGKHSFDTFSHQRPCLLKSLKREGANKLRYPPNSQSKVDWGKFFLLRRFNKEKLGLLVLTFLGIVAAVLVNAGYY.

At 1–463 the chain is on the cytoplasmic side; the sequence is MEREVQRVRQ…FLLRRFNKEK (463 aa). Position 185–190 (185–190) interacts with NAD(+); it reads GNTAVG. Active-site residues include E207 and C241. The residue at position 293 (S293) is a Phosphoserine. Residues 464 to 484 traverse the membrane as a helical segment; it reads LGLLVLTFLGIVAAVLVNAGY. The Prevents secretion from ER signature appears at 481-484; sequence NAGY.

This sequence belongs to the aldehyde dehydrogenase family. Homodimer.

It is found in the microsome membrane. Its subcellular location is the endoplasmic reticulum membrane. The catalysed reaction is an aldehyde + NAD(+) + H2O = a carboxylate + NADH + 2 H(+). It carries out the reaction a fatty aldehyde + NAD(+) + H2O = a fatty acid + NADH + 2 H(+). It catalyses the reaction (2E)-hexadecenal + NAD(+) + H2O = (E)-hexadec-2-enoate + NADH + 2 H(+). The enzyme catalyses hexadecanoate + NADH + 2 H(+) = hexadecanal + NAD(+) + H2O. The catalysed reaction is 22-oxodocosanoate + NAD(+) + H2O = docosanedioate + NADH + 2 H(+). It carries out the reaction 2,6,10,14-tetramethylpentadecanal + NAD(+) + H2O = 2,6,10,14-tetramethylpentadecanoate + NADH + 2 H(+). It catalyses the reaction octadecanal + NAD(+) + H2O = octadecanoate + NADH + 2 H(+). The enzyme catalyses dodecanoate + NADH + 2 H(+) = dodecanal + NAD(+) + H2O. The catalysed reaction is decanal + NAD(+) + H2O = decanoate + NADH + 2 H(+). It carries out the reaction tetradecanal + NAD(+) + H2O = tetradecanoate + NADH + 2 H(+). It catalyses the reaction octanal + NAD(+) + H2O = octanoate + NADH + 2 H(+). The enzyme catalyses heptanal + NAD(+) + H2O = heptanoate + NADH + 2 H(+). The catalysed reaction is (2E,6E)-farnesal + NAD(+) + H2O = (2E,6E)-farnesoate + NADH + 2 H(+). Its function is as follows. Catalyzes the oxidation of medium and long-chain aliphatic aldehydes to fatty acids. Active on a variety of saturated and unsaturated aliphatic aldehydes between 6 and 24 carbons in length. Responsible for conversion of the sphingosine 1-phosphate (S1P) degradation product hexadecenal to hexadecenoic acid. In Macaca fascicularis (Crab-eating macaque), this protein is Aldehyde dehydrogenase family 3 member A2 (ALDH3A2).